A 94-amino-acid polypeptide reads, in one-letter code: ATP synthase F(0) complex subunit f, mitochondrial (94 aa).

Position 2 is an N-acetylalanine (A2). The residue at position 3 (S3) is a Phosphoserine. An N6-acetyllysine modification is found at K22. Residues M68–L85 traverse the membrane as a helical segment.

This sequence belongs to the ATPase F chain family. Component of the ATP synthase complex composed at least of ATP5F1A/subunit alpha, ATP5F1B/subunit beta, ATP5MC1/subunit c (homooctomer), MT-ATP6/subunit a, MT-ATP8/subunit 8, ATP5ME/subunit e, ATP5MF/subunit f, ATP5MG/subunit g, ATP5MK/subunit k, ATP5MJ/subunit j, ATP5F1C/subunit gamma, ATP5F1D/subunit delta, ATP5F1E/subunit epsilon, ATP5PF/subunit F6, ATP5PB/subunit b, ATP5PD/subunit d, ATP5PO/subunit OSCP. ATP synthase complex consists of a soluble F(1) head domain (subunits alpha(3) and beta(3)) - the catalytic core - and a membrane F(0) domain - the membrane proton channel (subunits c, a, 8, e, f, g, k and j). These two domains are linked by a central stalk (subunits gamma, delta, and epsilon) rotating inside the F1 region and a stationary peripheral stalk (subunits F6, b, d, and OSCP).

Its subcellular location is the mitochondrion. The protein localises to the mitochondrion inner membrane. Its function is as follows. Subunit f, of the mitochondrial membrane ATP synthase complex (F(1)F(0) ATP synthase or Complex V) that produces ATP from ADP in the presence of a proton gradient across the membrane which is generated by electron transport complexes of the respiratory chain. ATP synthase complex consist of a soluble F(1) head domain - the catalytic core - and a membrane F(1) domain - the membrane proton channel. These two domains are linked by a central stalk rotating inside the F(1) region and a stationary peripheral stalk. During catalysis, ATP synthesis in the catalytic domain of F(1) is coupled via a rotary mechanism of the central stalk subunits to proton translocation. In vivo, can only synthesize ATP although its ATP hydrolase activity can be activated artificially in vitro. Part of the complex F(0) domain. The polypeptide is ATP synthase F(0) complex subunit f, mitochondrial (Pongo abelii (Sumatran orangutan)).